Reading from the N-terminus, the 399-residue chain is 3-phosphoshikimate 1-carboxyvinyltransferase (399 aa).

3-phosphoshikimate is bound by residues K19, S20, and R24. A phosphoenolpyruvate-binding site is contributed by K19. 2 residues coordinate phosphoenolpyruvate: G83 and R111. Positions 152, 153, 154, 288, 310, and 314 each coordinate 3-phosphoshikimate. A phosphoenolpyruvate-binding site is contributed by Q154. Residue D288 is the Proton acceptor of the active site. Phosphoenolpyruvate contacts are provided by R318, R359, and K385.

This sequence belongs to the EPSP synthase family. As to quaternary structure, monomer.

It localises to the cytoplasm. The enzyme catalyses 3-phosphoshikimate + phosphoenolpyruvate = 5-O-(1-carboxyvinyl)-3-phosphoshikimate + phosphate. Its pathway is metabolic intermediate biosynthesis; chorismate biosynthesis. Its function is as follows. Catalyzes the transfer of the enolpyruvyl moiety of phosphoenolpyruvate (PEP) to the 5-hydroxyl of shikimate-3-phosphate (S3P) to produce enolpyruvyl shikimate-3-phosphate and inorganic phosphate. The sequence is that of 3-phosphoshikimate 1-carboxyvinyltransferase from Thermococcus kodakarensis (strain ATCC BAA-918 / JCM 12380 / KOD1) (Pyrococcus kodakaraensis (strain KOD1)).